The following is a 173-amino-acid chain: Mesencephalic astrocyte-derived neurotrophic factor homolog (173 aa).

The N-terminal stretch at 1–22 (MKTWYMVVVIGFLATLVQTSLA) is a signal peptide. Disulfide bonds link C28-C114, C31-C103, C61-C72, and C148-C151.

It belongs to the ARMET family.

The protein resides in the secreted. Its function is as follows. Required during the maturation of the embryonic nervous system for maintenance of neuronal and cuticular connectivity. Essential for maintenance of dopaminergic neurons and dopamine levels. The protein is Mesencephalic astrocyte-derived neurotrophic factor homolog of Drosophila yakuba (Fruit fly).